We begin with the raw amino-acid sequence, 164 residues long: Disulfide bond formation protein B (164 aa).

Over 1-4 (MRII) the chain is Cytoplasmic. A helical transmembrane segment spans residues 5 to 21 (FLLIALICAGLVSYALY). Residues 22–39 (LQLADGLLPCPLCIFQRM) are Periplasmic-facing. Residues cysteine 31 and cysteine 34 are joined by a disulfide bond. Residues 40–56 (AYWLVGITALFAFIHHP) traverse the membrane as a helical segment. Residues 57-62 (QRLGRR) are Cytoplasmic-facing. The chain crosses the membrane as a helical span at residues 63-80 (IYCGLIILFSLAGAIVAG). Topologically, residues 81–136 (RQAWLVRFPEAFECGISPEEAFLNELPLARWWPDMFEANGDCTDGTWQFLSLTIPD) are periplasmic. Cysteine 94 and cysteine 122 are oxidised to a cystine. Residues 137–155 (WSLLIFLAFSLIAGLLWRS) form a helical membrane-spanning segment. The Cytoplasmic portion of the chain corresponds to 156–164 (RSISSSNLK).

This sequence belongs to the DsbB family.

It is found in the cell inner membrane. Its function is as follows. Required for disulfide bond formation in some periplasmic proteins. Acts by oxidizing the DsbA protein. The sequence is that of Disulfide bond formation protein B from Nitrosomonas europaea (strain ATCC 19718 / CIP 103999 / KCTC 2705 / NBRC 14298).